A 383-amino-acid chain; its full sequence is Multidrug resistance protein MexA (383 aa).

Residues 1 to 23 (MQRTPAMRVLVPALLVAISALSG) form the signal peptide. C24 carries the N-palmitoyl cysteine lipid modification. A lipid anchor (S-diacylglycerol cysteine) is attached at C24. Positions 97–151 (ATYEADYQSAQANLASTQEQAQRYKLLVADQAVSKQQYADANAAYLQSKAAVEQA) form a coiled coil.

It belongs to the membrane fusion protein (MFP) (TC 8.A.1) family. Component of the MexAB-OprM multidrug efflux complex, composed of six MexA subunits forming a hexameric tube, binding to a MexB trimer, which interact with the trimeric OprM outer membrane channel protein. OprM is thought to not directly contact MexB; instead, MexA joins MexB and OprM by forming a funnel-like hexamer anchored to the inner membrane. MexA may initially form a hexameric ring complex with MexB prior to OprM, then OprM undergoes a conformational change as it contacts MexA, allowing the periplasmic gate to open. It is thought that, under high intracellular substrate concentration, MexB ejects substrate into the tunnel formed by MexA-OprM; as the substrate level declines, conformational changes in MexB cause efflux to reduce and stop and the complex shifts to the closed state. MexB subunit acts as a substrate:proton antiporter and activity is enhanced significantly when in complex with MexA and OprM, in vitro.

The protein localises to the cell inner membrane. With respect to regulation, export of antibiotics and solvents is dramatically decreased in the presence of the protonophore carbonyl cyanide m-chlorophenylhydrazone (CCCP), therefore may be driven by a proton gradient. Antibiotic efflux is inhibited by pyridopyrimidine derivatives, such as ABI-PP, acting by binding to a hydrophobic pocket in MexB. The periplasmic linker component of the MexAB-OprM efflux system that confers multidrug resistance. Functions as the major efflux pump for n-hexane and p-xylene efflux. Has been shown in one study to be involved in the active efflux of the autoinducer N-(3-oxododecanoyl) homoserine lactone, thereby playing an indirect role in quorum-sensing; but has been shown in another study not to be involved in efflux of this autoinducer. Over-expression of the pump increases antibiotic and solvent efflux capacities. Implicated in the secretion of the siderophore pyoverdine. The sequence is that of Multidrug resistance protein MexA (mexA) from Pseudomonas aeruginosa (strain ATCC 15692 / DSM 22644 / CIP 104116 / JCM 14847 / LMG 12228 / 1C / PRS 101 / PAO1).